Here is a 393-residue protein sequence, read N- to C-terminus: Endoglucanase 1 (393 aa).

An N-terminal signal peptide occupies residues 1–26 (MAFKLNIGLLALSLSLSLVHLDGVRA). Catalysis depends on Asp-34, which acts as the Nucleophile. Catalysis depends on Asp-152, which acts as the Proton donor. The interval 233 to 393 (GCQRKDDNTI…GGHKKCHKKH (161 aa)) is disordered. Composition is skewed to low complexity over residues 319-329 (QGSSNGDATTG) and 337-370 (DSGS…NPGA). An N-linked (GlcNAc...) asparagine glycan is attached at Asn-343. Residues 371–384 (AQGGQGGAQPGPSG) are compositionally biased toward gly residues.

The protein belongs to the glycosyl hydrolase 45 (cellulase K) family. Post-translationally, may also be O-glycosylated. As to expression, hyphal tip.

Its subcellular location is the secreted. The catalysed reaction is Endohydrolysis of (1-&gt;4)-beta-D-glucosidic linkages in cellulose, lichenin and cereal beta-D-glucans.. This is Endoglucanase 1 (EGL1) from Mycosarcoma maydis (Corn smut fungus).